A 270-amino-acid chain; its full sequence is NADPH-dependent 7-cyano-7-deazaguanine reductase (270 aa).

79–81 provides a ligand contact to substrate; that stretch reads IES. 81–82 serves as a coordination point for NADPH; the sequence is SK. The active-site Thioimide intermediate is the Cys-177. Asp-184 acts as the Proton donor in catalysis. 216-217 is a substrate binding site; that stretch reads HE. 245–246 is a binding site for NADPH; sequence RG.

Belongs to the GTP cyclohydrolase I family. QueF type 2 subfamily. Homodimer.

The protein localises to the cytoplasm. It catalyses the reaction 7-aminomethyl-7-carbaguanine + 2 NADP(+) = 7-cyano-7-deazaguanine + 2 NADPH + 3 H(+). Its pathway is tRNA modification; tRNA-queuosine biosynthesis. Its function is as follows. Catalyzes the NADPH-dependent reduction of 7-cyano-7-deazaguanine (preQ0) to 7-aminomethyl-7-deazaguanine (preQ1). The sequence is that of NADPH-dependent 7-cyano-7-deazaguanine reductase from Acinetobacter baumannii (strain AB307-0294).